Consider the following 479-residue polypeptide: Pyruvate kinase (479 aa).

Arg36 serves as a coordination point for substrate. K(+) is bound by residues Asn38, Ser40, and Asp70. ATP is bound at residue 38 to 41 (NFSH). Positions 77 and 160 each coordinate ATP. Glu225 contacts Mg(2+). Residues Gly251, Asp252, and Thr284 each coordinate substrate. Asp252 lines the Mg(2+) pocket.

This sequence belongs to the pyruvate kinase family. Homotetramer. It depends on Mg(2+) as a cofactor. K(+) is required as a cofactor.

It catalyses the reaction pyruvate + ATP = phosphoenolpyruvate + ADP + H(+). It functions in the pathway carbohydrate degradation; glycolysis; pyruvate from D-glyceraldehyde 3-phosphate: step 5/5. With respect to regulation, allosterically activated by AMP and by several sugar phosphates. Belongs to type II PK. This Buchnera aphidicola subsp. Baizongia pistaciae (strain Bp) protein is Pyruvate kinase (pykA).